Reading from the N-terminus, the 158-residue chain is 6,7-dimethyl-8-ribityllumazine synthase (158 aa).

Residues Phe22, 57–59, and 81–83 each bind 5-amino-6-(D-ribitylamino)uracil; these read AVE and AVI. (2S)-2-hydroxy-3-oxobutyl phosphate is bound at residue 86-87; sequence GT. Catalysis depends on His89, which acts as the Proton donor. Phe114 is a 5-amino-6-(D-ribitylamino)uracil binding site. Arg128 lines the (2S)-2-hydroxy-3-oxobutyl phosphate pocket.

The protein belongs to the DMRL synthase family. Forms an icosahedral capsid composed of 60 subunits, arranged as a dodecamer of pentamers.

It catalyses the reaction (2S)-2-hydroxy-3-oxobutyl phosphate + 5-amino-6-(D-ribitylamino)uracil = 6,7-dimethyl-8-(1-D-ribityl)lumazine + phosphate + 2 H2O + H(+). The protein operates within cofactor biosynthesis; riboflavin biosynthesis; riboflavin from 2-hydroxy-3-oxobutyl phosphate and 5-amino-6-(D-ribitylamino)uracil: step 1/2. Catalyzes the formation of 6,7-dimethyl-8-ribityllumazine by condensation of 5-amino-6-(D-ribitylamino)uracil with 3,4-dihydroxy-2-butanone 4-phosphate. This is the penultimate step in the biosynthesis of riboflavin. This is 6,7-dimethyl-8-ribityllumazine synthase from Shewanella putrefaciens (strain CN-32 / ATCC BAA-453).